A 199-amino-acid chain; its full sequence is Cell division protein SepF (199 aa).

The tract at residues 15–79 is disordered; the sequence is TEDGDETEVQ…PQPQQKSSTE (65 aa).

It belongs to the SepF family. In terms of assembly, homodimer. Interacts with FtsZ.

The protein localises to the cytoplasm. Its function is as follows. Cell division protein that is part of the divisome complex and is recruited early to the Z-ring. Probably stimulates Z-ring formation, perhaps through the cross-linking of FtsZ protofilaments. Its function overlaps with FtsA. The protein is Cell division protein SepF of Streptococcus sanguinis (strain SK36).